A 197-amino-acid chain; its full sequence is Holliday junction branch migration complex subunit RuvA (197 aa).

The segment at 1–64 (MIGHLEGRLR…EDAIQLYGFR (64 aa)) is domain I. A domain II region spans residues 65–143 (TVAEKDMFLR…VKKGREAEQP (79 aa)). The segment at 144-145 (AP) is flexible linker. The interval 146 to 197 (AAESSYGDAYSALVNLGYRPAEAEKALGKAIKSLGADPPVEKLLKETLRLLA) is domain III.

Belongs to the RuvA family. As to quaternary structure, homotetramer. Forms an RuvA(8)-RuvB(12)-Holliday junction (HJ) complex. HJ DNA is sandwiched between 2 RuvA tetramers; dsDNA enters through RuvA and exits via RuvB. An RuvB hexamer assembles on each DNA strand where it exits the tetramer. Each RuvB hexamer is contacted by two RuvA subunits (via domain III) on 2 adjacent RuvB subunits; this complex drives branch migration. In the full resolvosome a probable DNA-RuvA(4)-RuvB(12)-RuvC(2) complex forms which resolves the HJ.

The protein localises to the cytoplasm. The RuvA-RuvB-RuvC complex processes Holliday junction (HJ) DNA during genetic recombination and DNA repair, while the RuvA-RuvB complex plays an important role in the rescue of blocked DNA replication forks via replication fork reversal (RFR). RuvA specifically binds to HJ cruciform DNA, conferring on it an open structure. The RuvB hexamer acts as an ATP-dependent pump, pulling dsDNA into and through the RuvAB complex. HJ branch migration allows RuvC to scan DNA until it finds its consensus sequence, where it cleaves and resolves the cruciform DNA. This chain is Holliday junction branch migration complex subunit RuvA, found in Syntrophobacter fumaroxidans (strain DSM 10017 / MPOB).